Here is a 564-residue protein sequence, read N- to C-terminus: Efflux pump DEP3 (564 aa).

The segment covering 1–12 (MVYSSTSSSQNR) has biased composition (polar residues). A disordered region spans residues 1–48 (MVYSSTSSSQNRPDGEKHVEAVGSSTRIPSDELVDRGGGDTTTGKQSP). Basic and acidic residues predominate over residues 29–38 (PSDELVDRGG). The next 14 membrane-spanning stretches (helical) occupy residues 65 to 85 (STTLLFALDNTIVANIQPAII), 91 to 111 (LELLSWIGTGFALGTMFILLW), 122 to 142 (WVYIFNIFLFEAGSALCGAAP), 152 to 172 (VIAGVGGSGMYSGTLTYVSVL), 185 to 205 (STVVWGIGSVLGPVVGGAFAA), 212 to 232 (WGFYVNLPIGAAFAPVYFLLF), 255 to 275 (AVIFLAGSACLTVVLTFGGVV), 281 to 301 (GTVIALWTVTGILLVAFIVLL), 332 to 352 (FLSSGIILAMTYYVPLYFQFI), 362 to 382 (VRLLPLIMFMVVASMVNGFLM), 386 to 406 (GLIPIWYIGGSSLALIGTALM), 423 to 443 (ILIGAGTGSYIVAGFAIVQSL), 452 to 472 (AVGAMTIFQDLGMVLFLAISG), and 528 to 548 (TIWAFFLAAAALSVVCSFPLL).

Belongs to the major facilitator superfamily. TCR/Tet family.

It localises to the cell membrane. Efflux pump; part of the gene cluster that mediates the biosynthesis of depudecin, a highly oxidized eleven-carbon linear polyketide that acts as a histone deacetylase (HDAC) inhibitor and makes a small contribution to pathogenesis. Is presumed either to be responsible for exporting depudecin, to provide self-protection, or both. The sequence is that of Efflux pump DEP3 from Alternaria brassicicola (Dark leaf spot agent).